The chain runs to 236 residues: Small ribosomal subunit protein uS3 (236 aa).

In terms of domain architecture, KH type-2 spans 39–112 (IREFITKHPK…RINLKVEEVG (74 aa)). The interval 212–236 (YGDDNDGADAQTGQASKKPKRSYKR) is disordered.

The protein belongs to the universal ribosomal protein uS3 family. Part of the 30S ribosomal subunit. Forms a tight complex with proteins S10 and S14.

Its function is as follows. Binds the lower part of the 30S subunit head. Binds mRNA in the 70S ribosome, positioning it for translation. The polypeptide is Small ribosomal subunit protein uS3 (Rhodopirellula baltica (strain DSM 10527 / NCIMB 13988 / SH1)).